The chain runs to 117 residues: Putative iron-sulfur cluster insertion protein ErpA (117 aa).

Residues C45, C109, and C111 each contribute to the iron-sulfur cluster site.

This sequence belongs to the HesB/IscA family. As to quaternary structure, homodimer. Iron-sulfur cluster serves as cofactor.

In terms of biological role, required for insertion of 4Fe-4S clusters. This is Putative iron-sulfur cluster insertion protein ErpA from Methylobacillus flagellatus (strain ATCC 51484 / DSM 6875 / VKM B-1610 / KT).